The following is a 276-amino-acid chain: MEKIPVLVAGALGKMGSEVIKAIYKSNDCELVAAIDNANEMEGVDIGTALGMDQMDVAVTADLEGSLCVASQSVRNSSGNAVLIDFTHPNVVYEHSRASIAYGVHPVIGTTGLSIVQLEELREFANKASIGAAIIPNFSVGMVLLQQAAAAAASFYDYAELTESHHNQKADAPSGTCIKTAEIIEEIGKSFNKTTIKEQESIKGSRGGLRESGLRLHSVRLPGIVAQQQVLFGSPGETYLLSHNTIDRSAYMPGVLHTIRKVRHLKSLVYGLEKIL.

NAD(+) is bound by residues 10–15 (GALGKM), Asp-36, and 109–111 (GTT). The Proton donor/acceptor role is filled by His-165. Residue His-166 coordinates (S)-2,3,4,5-tetrahydrodipicolinate. The Proton donor role is filled by Lys-169. A (S)-2,3,4,5-tetrahydrodipicolinate-binding site is contributed by 175 to 176 (GT).

The protein belongs to the DapB family.

Its subcellular location is the cytoplasm. The enzyme catalyses (S)-2,3,4,5-tetrahydrodipicolinate + NAD(+) + H2O = (2S,4S)-4-hydroxy-2,3,4,5-tetrahydrodipicolinate + NADH + H(+). It catalyses the reaction (S)-2,3,4,5-tetrahydrodipicolinate + NADP(+) + H2O = (2S,4S)-4-hydroxy-2,3,4,5-tetrahydrodipicolinate + NADPH + H(+). It functions in the pathway amino-acid biosynthesis; L-lysine biosynthesis via DAP pathway; (S)-tetrahydrodipicolinate from L-aspartate: step 4/4. Catalyzes the conversion of 4-hydroxy-tetrahydrodipicolinate (HTPA) to tetrahydrodipicolinate. This Prochlorococcus marinus (strain SARG / CCMP1375 / SS120) protein is 4-hydroxy-tetrahydrodipicolinate reductase.